The sequence spans 457 residues: Adenylosuccinate synthetase isozyme 1 (457 aa).

The tract at residues 1-25 (MSGTRASNDRPPSAGGVKRGRLQHE) is disordered. GTP contacts are provided by residues 42–48 (GDEGKGK) and 70–72 (GHT). Residue D43 is the Proton acceptor of the active site. Residues D43 and G70 each contribute to the Mg(2+) site. A substrate-binding site is contributed by D43. IMP contacts are provided by residues 43-46 (DEGK), 68-71 (NAGH), T163, R177, N256, T271, and R335. H71 functions as the Proton donor in the catalytic mechanism. A substrate-binding site is contributed by 331 to 337 (VTTGRKR). Residues R337, 363–365 (KLD), and 445–448 (GVGK) contribute to the GTP site.

This sequence belongs to the adenylosuccinate synthetase family. In terms of assembly, homodimer. Mg(2+) serves as cofactor. In terms of tissue distribution, predominantly expressed in the striated muscle tissues.

The protein resides in the cytoplasm. It catalyses the reaction IMP + L-aspartate + GTP = N(6)-(1,2-dicarboxyethyl)-AMP + GDP + phosphate + 2 H(+). The protein operates within purine metabolism; AMP biosynthesis via de novo pathway; AMP from IMP: step 1/2. Functionally, component of the purine nucleotide cycle (PNC), which interconverts IMP and AMP to regulate the nucleotide levels in various tissues, and which contributes to glycolysis and ammoniagenesis. Catalyzes the first committed step in the biosynthesis of AMP from IMP. This Sus scrofa (Pig) protein is Adenylosuccinate synthetase isozyme 1.